The following is a 324-amino-acid chain: Heparan sulfate 2-O-sulfotransferase hst-2 (324 aa).

Residues Met1–Arg6 are Cytoplasmic-facing. A helical; Signal-anchor for type II membrane protein transmembrane segment spans residues Lys7–Leu24. Topologically, residues Lys25–Ser324 are lumenal. Residues Asn75 and Asn94 are each glycosylated (N-linked (GlcNAc...) asparagine). Active-site residues include His107 and His109. N-linked (GlcNAc...) asparagine glycosylation occurs at Asn161. Disulfide bonds link Cys167–Cys175 and Cys188–Cys194.

The protein belongs to the sulfotransferase 3 family. In terms of assembly, homotrimer. In terms of tissue distribution, present in the hypodermis, muscle, distal tip cells (DTCs) and in neurons (at protein level).

The protein resides in the golgi apparatus membrane. Its function is as follows. Catalyzes the transfer of sulfate to the C2-position of selected hexuronic acid residues within the maturing heparan sulfate (HS). Involved in cell adhesion and guidance by specifically modifying proteoglycans in the extracellular matrix and on the cell surface that are essential for axon migrations. The polypeptide is Heparan sulfate 2-O-sulfotransferase hst-2 (Caenorhabditis elegans).